The primary structure comprises 720 residues: Proline-rich receptor-like protein kinase PERK12 (720 aa).

Positions 1–240 (MSDLGESPSS…GNGDGGGGGG (240 aa)) are disordered. Residues 1 to 246 (MSDLGESPSS…GGGGGYQGKT (246 aa)) lie on the Extracellular side of the membrane. Residues 10 to 25 (SSPPAPPADTAPPPET) are compositionally biased toward pro residues. Positions 26–35 (PSENSALPPV) are enriched in low complexity. Pro residues-rich tracts occupy residues 52-84 (LSEP…PSDS) and 92-116 (PSPP…PAPP). Asn117 is a glycosylation site (N-linked (GlcNAc...) asparagine). 2 stretches are compositionally biased toward pro residues: residues 123–138 (NPPP…PSSP) and 147–207 (PESP…PPKT). Residues 247–267 (MVGMAVAGFAIMALIGVVFLV) traverse the membrane as a helical segment. Residues 268 to 720 (RRKKKRNIDS…ETRPFNNRRF (453 aa)) lie on the Cytoplasmic side of the membrane. The interval 300 to 349 (QDPGKGYSSGPNGSMYNNSQQQQSSMGNSYGTAGGGYPHHQMQSSGTPDS) is disordered. Over residues 311-330 (NGSMYNNSQQQQSSMGNSYG) the composition is skewed to low complexity. A Protein kinase domain is found at 371–624 (FARKNILGEG…EVFRMIETAA (254 aa)). ATP-binding positions include 377 to 385 (LGEGGFGCV) and Lys399. Tyr444 bears the Phosphotyrosine mark. The active-site Proton acceptor is Asp495. Ser528 carries the post-translational modification Phosphoserine. Residues Thr529 and Thr534 each carry the phosphothreonine modification. At Tyr542 the chain carries Phosphotyrosine. The disordered stretch occupies residues 698–720 (SAKSSSDFSGNESETRPFNNRRF).

The protein belongs to the protein kinase superfamily. Ser/Thr protein kinase family. Mostly expressed in apical parts, including flower buds, and particularly in anthers. Also present in root hairs.

It localises to the cell membrane. It catalyses the reaction L-seryl-[protein] + ATP = O-phospho-L-seryl-[protein] + ADP + H(+). The catalysed reaction is L-threonyl-[protein] + ATP = O-phospho-L-threonyl-[protein] + ADP + H(+). Functionally, regulates the auxin-related MAX (More Axillary Growth) pathway during the shoot branching. This is Proline-rich receptor-like protein kinase PERK12 (PERK12) from Arabidopsis thaliana (Mouse-ear cress).